Consider the following 618-residue polypeptide: Probable peptide transporter ptr2 (618 aa).

At Ser22 the chain carries Phosphoserine. A Phosphotyrosine modification is found at Tyr23. Ser25 and Ser33 each carry phosphoserine. The interval 26 to 50 is disordered; that stretch reads KEKKADGSATINTADEQSSTDELQK. Polar residues predominate over residues 34-50; it reads ATINTADEQSSTDELQK. Thr35 carries the phosphothreonine modification. Ser44 is subject to Phosphoserine. Residue Thr45 is modified to Phosphothreonine. Phosphoserine occurs at positions 51 and 53. Thr54 bears the Phosphothreonine mark. A run of 10 helical transmembrane segments spans residues 131–151, 161–181, 187–207, 247–267, 273–293, 400–420, 430–450, 475–495, 510–530, and 541–561; these read GLSNFFTFWCYVTPVGAALIA, IVCSAVIYFIGILILTCTAIP, GKSMGGFVVSLIIIGLGTGGI, YMIFYWSINVGSLSVLATTSL, FVYAYLLPLCVFVIPLIILAV, FDSIALIIFIPICDNIIYPLL, ILRITLGFMFATASMIYAAVL, VWIQIPAYVLIAFSEIFASIT, SIITALFLFTNAFGAILSICI, and WMYTGIAVTAFIAGIMFWVCF. The residue at position 594 (Ser594) is a Phosphoserine. Thr618 carries the phosphothreonine modification.

Belongs to the major facilitator superfamily. Proton-dependent oligopeptide transporter (POT/PTR) (TC 2.A.17) family.

It localises to the membrane. Functionally, uptake of small peptides. The polypeptide is Probable peptide transporter ptr2 (ptr2) (Schizosaccharomyces pombe (strain 972 / ATCC 24843) (Fission yeast)).